A 383-amino-acid chain; its full sequence is TOM1-like protein 2 (383 aa).

The 134-residue stretch at 45-178 (ATLETLEEPN…GLHARGEENS (134 aa)) folds into the VHS domain. Positions 223–310 (LSIKDKKEQI…VLSSYKKPDE (88 aa)) constitute a GAT domain. Residues 305–383 (YKKPDETEKK…LGLSSDEDEK (79 aa)) form a disordered region. 2 stretches are compositionally biased toward basic and acidic residues: residues 306–316 (KKPDETEKKAS) and 339–354 (EPVK…KHSE). A phosphoserine mark is found at Ser-377 and Ser-378.

The protein belongs to the TOM1 family. As to expression, ubiquitously expressed.

It is found in the cytoplasm. The protein resides in the membrane. In terms of biological role, binds ubiquitin in vitro. Might contribute to the loading of the ESCRT machinery. In Arabidopsis thaliana (Mouse-ear cress), this protein is TOM1-like protein 2.